The primary structure comprises 585 residues: GRR1-like protein 1 (585 aa).

The region spanning 1–48 is the F-box domain; sequence MGLRFPPKVLEHILSFIDSNEDRNSVSLVCKSWFETERKTRKRVFVGN. Residue Lys70 participates in 1D-myo-inositol hexakisphosphate binding. The interaction with auxin-responsive proteins stretch occupies residues 77–78; it reads DY. 1D-myo-inositol hexakisphosphate contacts are provided by residues 109–110 and Arg340; that span reads KR. The tract at residues 343–348 is interaction with auxin-responsive proteins; it reads PSEPDL. 397-399 contacts 1D-myo-inositol hexakisphosphate; that stretch reads CFR. Residues 401 to 405 are interaction with auxin-responsive proteins; that stretch reads CVIEP. Arg432 serves as a coordination point for 1D-myo-inositol hexakisphosphate. The tract at residues 460–461 is interaction with auxin-responsive proteins; it reads AF. Residues 480–481 and Arg505 contribute to the 1D-myo-inositol hexakisphosphate site; that span reads KK.

As to quaternary structure, part of a SCF (SKP1-cullin-F-box) protein ligase complex. Interacts with CUL1, SKP1A/ASK1 and SKP1B/ASK2. Interacts with Aux/IAA proteins (IAA7 and IAA12) in an auxin-dependent manner. Ubiquitous.

Its subcellular location is the nucleus. Its pathway is protein modification; protein ubiquitination. Component of SCF(ASK-cullin-F-box) E3 ubiquitin ligase complexes, which may mediate the ubiquitination and subsequent proteasomal degradation of target proteins. Auxin receptor that mediates Aux/IAA proteins proteasomal degradation and auxin-regulated transcription. Involved in embryogenesis regulation by auxin. Confers sensitivity to the virulent bacterial pathogen P.syringae. Mediates glucose repression in yeast. The sequence is that of GRR1-like protein 1 (GRH1) from Arabidopsis thaliana (Mouse-ear cress).